A 162-amino-acid polypeptide reads, in one-letter code: MLEEENSQMICQIYRIYTKDISFEAPGAPQIFQKEGSPDIKLDLDTSSNLLAENTHEVVLRITLTATIEGQTSFLCEVQQAGIFFIKNIENMQLKHCLGAYCPNILFPYARECISNLVSKGSFPHLHLEPINFDSLFMNYVQQEAEKQNESDPIIIKNSEQD.

Belongs to the SecB family. As to quaternary structure, homotetramer, a dimer of dimers. One homotetramer interacts with 1 SecA dimer.

It localises to the cytoplasm. Functionally, one of the proteins required for the normal export of preproteins out of the cell cytoplasm. It is a molecular chaperone that binds to a subset of precursor proteins, maintaining them in a translocation-competent state. It also specifically binds to its receptor SecA. In Hamiltonella defensa subsp. Acyrthosiphon pisum (strain 5AT), this protein is Protein-export protein SecB.